We begin with the raw amino-acid sequence, 122 residues long: MSLTNEKIVEAIAEKSIMEVMELVKAIEDRFGVSAAAPVMVSGSAAAAAPVEEQTEFTVTLKEAGAKKVEVIKAVRAVTGLGLKEAKDLTEAGGILKEAVSKEEAEKIKKELEAAGATVEVK.

It belongs to the bacterial ribosomal protein bL12 family. As to quaternary structure, homodimer. Part of the ribosomal stalk of the 50S ribosomal subunit. Forms a multimeric L10(L12)X complex, where L10 forms an elongated spine to which 2 to 4 L12 dimers bind in a sequential fashion. Binds GTP-bound translation factors.

In terms of biological role, forms part of the ribosomal stalk which helps the ribosome interact with GTP-bound translation factors. Is thus essential for accurate translation. This chain is Large ribosomal subunit protein bL12, found in Xylella fastidiosa (strain M12).